The sequence spans 155 residues: Large ribosomal subunit protein uL13 (155 aa).

This sequence belongs to the universal ribosomal protein uL13 family. Part of the 50S ribosomal subunit.

Its function is as follows. This protein is one of the early assembly proteins of the 50S ribosomal subunit, although it is not seen to bind rRNA by itself. It is important during the early stages of 50S assembly. The sequence is that of Large ribosomal subunit protein uL13 from Rickettsia conorii (strain ATCC VR-613 / Malish 7).